A 202-amino-acid polypeptide reads, in one-letter code: MPIGVPKVPFRSPGEEDAAWVDIYNRLHRERLLFLGQELDSEISNQLVGLMVYLSIEDKTRDFFLFINSPGGWVIPGIGLYDTMQFVPPDVHTICMGLAASMGSFILVGGEITKRLAFPHARVMIHQPASSFYEAQAGEFVLEAEELLKLRETLTRVYVQRTGKPLWVVSEDMERDVFLSATEAQAHGIVDLVGDENMGDLV.

The active-site Nucleophile is Ser101. His126 is an active-site residue.

Belongs to the peptidase S14 family. In terms of assembly, component of the chloroplastic Clp protease core complex.

The protein localises to the plastid. The protein resides in the chloroplast stroma. The catalysed reaction is Hydrolysis of proteins to small peptides in the presence of ATP and magnesium. alpha-casein is the usual test substrate. In the absence of ATP, only oligopeptides shorter than five residues are hydrolyzed (such as succinyl-Leu-Tyr-|-NHMec, and Leu-Tyr-Leu-|-Tyr-Trp, in which cleavage of the -Tyr-|-Leu- and -Tyr-|-Trp bonds also occurs).. Cleaves peptides in various proteins in a process that requires ATP hydrolysis. Has a chymotrypsin-like activity. Plays a major role in the degradation of misfolded proteins. This Acorus calamus (Sweet flag) protein is ATP-dependent Clp protease proteolytic subunit.